The sequence spans 313 residues: Homoserine O-succinyltransferase (313 aa).

Cysteine 142 functions as the Acyl-thioester intermediate in the catalytic mechanism. Residues lysine 163 and serine 192 each coordinate substrate. The Proton acceptor role is filled by histidine 235. Glutamate 237 is a catalytic residue. Position 249 (arginine 249) interacts with substrate.

Belongs to the MetA family.

The protein localises to the cytoplasm. It carries out the reaction L-homoserine + succinyl-CoA = O-succinyl-L-homoserine + CoA. It participates in amino-acid biosynthesis; L-methionine biosynthesis via de novo pathway; O-succinyl-L-homoserine from L-homoserine: step 1/1. Functionally, transfers a succinyl group from succinyl-CoA to L-homoserine, forming succinyl-L-homoserine. The polypeptide is Homoserine O-succinyltransferase (Vibrio campbellii (strain ATCC BAA-1116)).